Here is a 457-residue protein sequence, read N- to C-terminus: tRNA modification GTPase MnmE (457 aa).

Residues Arg-22, Glu-83, and Arg-122 each coordinate (6S)-5-formyl-5,6,7,8-tetrahydrofolate. The region spanning 219–378 (GLATAIIGRP…LEEAIKALFF (160 aa)) is the TrmE-type G domain. Asn-229 is a binding site for K(+). GTP contacts are provided by residues 229–234 (NVGKSS), 248–254 (TDIAGTT), and 273–276 (DTAG). Ser-233 serves as a coordination point for Mg(2+). Thr-248, Ile-250, and Thr-253 together coordinate K(+). Position 254 (Thr-254) interacts with Mg(2+). A (6S)-5-formyl-5,6,7,8-tetrahydrofolate-binding site is contributed by Lys-457.

This sequence belongs to the TRAFAC class TrmE-Era-EngA-EngB-Septin-like GTPase superfamily. TrmE GTPase family. In terms of assembly, homodimer. Heterotetramer of two MnmE and two MnmG subunits. K(+) is required as a cofactor.

It is found in the cytoplasm. Functionally, exhibits a very high intrinsic GTPase hydrolysis rate. Involved in the addition of a carboxymethylaminomethyl (cmnm) group at the wobble position (U34) of certain tRNAs, forming tRNA-cmnm(5)s(2)U34. In Listeria innocua serovar 6a (strain ATCC BAA-680 / CLIP 11262), this protein is tRNA modification GTPase MnmE.